A 696-amino-acid polypeptide reads, in one-letter code: Elongation factor G (696 aa).

The region spanning 10 to 290 (THFRNIGIAA…AVVDYLPSPL (281 aa)) is the tr-type G domain. Residues 19-26 (AHIDAGKT), 89-93 (DTPGH), and 143-146 (NKMD) each bind GTP.

The protein belongs to the TRAFAC class translation factor GTPase superfamily. Classic translation factor GTPase family. EF-G/EF-2 subfamily.

It localises to the cytoplasm. Functionally, catalyzes the GTP-dependent ribosomal translocation step during translation elongation. During this step, the ribosome changes from the pre-translocational (PRE) to the post-translocational (POST) state as the newly formed A-site-bound peptidyl-tRNA and P-site-bound deacylated tRNA move to the P and E sites, respectively. Catalyzes the coordinated movement of the two tRNA molecules, the mRNA and conformational changes in the ribosome. This is Elongation factor G from Deinococcus geothermalis (strain DSM 11300 / CIP 105573 / AG-3a).